We begin with the raw amino-acid sequence, 326 residues long: MGNAALRQLAALESVAFDDISGSVIAVDAHNWLYRYLTTTVKFTSDAAYTTESGVEVANLIGVVQGLPKFFEHDLTPVFVFDGGVTELKDEEVQERRVAREEAVELQAAAEERGDELAASRLEARTQRLTETIHETTRGLLNRLDVPIIEAPAEGEAQAAEMAIRGDVDYVGSEDYDTLLFGAPYTVRQLTSKGDPELMDLQTTLKNQNLTREQLVDVAILCGTDFNDGISGIGPATAISAINDHGDLWSVLDARDEFIQHADRVRSLFLDPPVTNEYTLHTTINPDMDAARSYVVDDWEVPADEVERGFERIETSVVQTGLDEWI.

An N-domain region spans residues 1 to 100; it reads MGNAALRQLA…EEVQERRVAR (100 aa). Aspartate 28, aspartate 82, glutamate 154, glutamate 156, aspartate 175, aspartate 177, and aspartate 225 together coordinate Mg(2+). The tract at residues 118–246 is I-domain; it reads AASRLEARTQ…TAISAINDHG (129 aa). The segment at 318–326 is interaction with PCNA; the sequence is VQTGLDEWI.

It belongs to the XPG/RAD2 endonuclease family. FEN1 subfamily. Interacts with PCNA. PCNA stimulates the nuclease activity without altering cleavage specificity. It depends on Mg(2+) as a cofactor.

Its function is as follows. Structure-specific nuclease with 5'-flap endonuclease and 5'-3' exonuclease activities involved in DNA replication and repair. During DNA replication, cleaves the 5'-overhanging flap structure that is generated by displacement synthesis when DNA polymerase encounters the 5'-end of a downstream Okazaki fragment. Binds the unpaired 3'-DNA end and kinks the DNA to facilitate 5' cleavage specificity. Cleaves one nucleotide into the double-stranded DNA from the junction in flap DNA, leaving a nick for ligation. Also involved in the base excision repair (BER) pathway. Acts as a genome stabilization factor that prevents flaps from equilibrating into structures that lead to duplications and deletions. Also possesses 5'-3' exonuclease activity on nicked or gapped double-stranded DNA. The polypeptide is Flap endonuclease 1 (Haloquadratum walsbyi (strain DSM 16790 / HBSQ001)).